The sequence spans 116 residues: Large ribosomal subunit protein uL24 (116 aa).

A disordered region spans residues 1 to 27 (MAGRKSSTPTRHKMHVKTGDTVQVISG).

Belongs to the universal ribosomal protein uL24 family. Part of the 50S ribosomal subunit.

One of two assembly initiator proteins, it binds directly to the 5'-end of the 23S rRNA, where it nucleates assembly of the 50S subunit. In terms of biological role, one of the proteins that surrounds the polypeptide exit tunnel on the outside of the subunit. The protein is Large ribosomal subunit protein uL24 of Picosynechococcus sp. (strain ATCC 27264 / PCC 7002 / PR-6) (Agmenellum quadruplicatum).